A 508-amino-acid polypeptide reads, in one-letter code: Probable cytosol aminopeptidase (508 aa).

2 residues coordinate Mn(2+): Lys276 and Asp281. Residue Lys288 is part of the active site. Mn(2+)-binding residues include Asp299, Asp358, and Glu360. The active site involves Arg362.

Belongs to the peptidase M17 family. Requires Mn(2+) as cofactor.

Its subcellular location is the cytoplasm. It carries out the reaction Release of an N-terminal amino acid, Xaa-|-Yaa-, in which Xaa is preferably Leu, but may be other amino acids including Pro although not Arg or Lys, and Yaa may be Pro. Amino acid amides and methyl esters are also readily hydrolyzed, but rates on arylamides are exceedingly low.. The catalysed reaction is Release of an N-terminal amino acid, preferentially leucine, but not glutamic or aspartic acids.. Functionally, presumably involved in the processing and regular turnover of intracellular proteins. Catalyzes the removal of unsubstituted N-terminal amino acids from various peptides. This is Probable cytosol aminopeptidase from Chlorobium luteolum (strain DSM 273 / BCRC 81028 / 2530) (Pelodictyon luteolum).